A 218-amino-acid chain; its full sequence is Esterase FPY3 (218 aa).

Active-site charge relay system residues include serine 95, aspartate 163, and histidine 190.

It belongs to the LovG family.

It functions in the pathway secondary metabolite biosynthesis. In terms of biological role, esterase; part of the gene cluster that mediates the biosynthesis of the gamma-pyrones fusapyrone (FPY) and deoxyfusapyrone (dFPY). FPY is an undecaketide and thus likely synthesized by the polyketide synthase FPY1 from acetyl-CoA functioning as starter unit and the addition of 10 malonyl-CoA extender units by successive Claisen-condensations. Next to this, FPY shares some rare features: C-glycosylated 4-deoxyglucose at C-3, a gem-dimethyl group at C-13, and an alpha-beta to beta-gamma double bond shift at C-20. During FPY biosynthesis mono-C-methyl groups are transferred to the tetra-, penta-, hexa- and heptaketide, while two C-methyl groups are transferred to the nonaketide, suggesting that the CMet domain is programmed to selectively catalyze two successive C-alpha-methylation reactions of the nonaketide, while other alpha-carbons are non- or mono-methylated only. While the origin of the 4'-deoxyglucose moiety remains opaque, its transfer to C-3 is most likely mediated by the C-glycosyltransferase FPY2. Next to this, the hydroxyl group present at C-33 and discriminating between FPY and dFPY, is likely to be installed by the cytochrome P450 monooxygenase FPY7. No putative function can be predicted for the remaining genes FPY3-FPY6. This Fusarium mangiferae (Mango malformation disease fungus) protein is Esterase FPY3.